Consider the following 115-residue polypeptide: Phosphoribosyl-AMP cyclohydrolase (115 aa).

Asp80 contacts Mg(2+). Cys81 serves as a coordination point for Zn(2+). 2 residues coordinate Mg(2+): Asp82 and Asp84. Zn(2+)-binding residues include Cys97 and Cys104.

It belongs to the PRA-CH family. As to quaternary structure, homodimer. Mg(2+) serves as cofactor. Zn(2+) is required as a cofactor.

The protein localises to the cytoplasm. It catalyses the reaction 1-(5-phospho-beta-D-ribosyl)-5'-AMP + H2O = 1-(5-phospho-beta-D-ribosyl)-5-[(5-phospho-beta-D-ribosylamino)methylideneamino]imidazole-4-carboxamide. It participates in amino-acid biosynthesis; L-histidine biosynthesis; L-histidine from 5-phospho-alpha-D-ribose 1-diphosphate: step 3/9. Functionally, catalyzes the hydrolysis of the adenine ring of phosphoribosyl-AMP. The chain is Phosphoribosyl-AMP cyclohydrolase from Mycolicibacterium smegmatis (strain ATCC 700084 / mc(2)155) (Mycobacterium smegmatis).